Here is a 401-residue protein sequence, read N- to C-terminus: MGFQSSVEGLTQASACGDILQYIESDDGGNKKSSKKKDKKKSGPIVVNLKLLFEVTDPAGNEAPSLMRMSAQQHSVKMPLPLDCVLSVSADESMTTVFTGLVEALNKQIADMEEVVLRYRKGSSFLVPQPFHFQLPKPAGLTTVIYPAGVPDSQLQAVREDLHRKFELSLDRPYLRRANAFHFPYEAYKDGYLRNPHIHLNPPNIEDAKLYLVQGVYSYHHYMQDRVDDDGWGCAYRSLQTICSWFQQQGYVETAVPTHTQIQQALVDVGDKEPRFVGSRQWIGSIEVQAVLNQLLGVTSKIMFVSQGSELATKGRELANHFHTEGTPVMIGGGVLAHTILGVAWSENTGEIRFLILDPHYTGGEDLQIITDKGWCGWKGPEFWDQNAYYNLCLPQRPKTV.

Active-site residues include Cys-234, Asp-358, and His-360.

It belongs to the peptidase C78 family.

The protein localises to the endoplasmic reticulum. The protein resides in the cytoplasm. It localises to the nucleus. In terms of biological role, thiol-dependent isopeptidase that specifically cleaves UFM1, a ubiquitin-like modifier protein, from conjugated proteins. While it is also able to mediate the processing of UFM1 precursors, a prerequisite for conjugation reactions, ufsp2 mainly acts as a protein deUFMylase that mediates deconjugation of UFM1 from target proteins. The protein is Ufm1-specific protease 2 of Danio rerio (Zebrafish).